Here is a 401-residue protein sequence, read N- to C-terminus: Probable acid ceramidase (401 aa).

An N-terminal signal peptide occupies residues 1–22 (MKPVAISLSLLLLVTLLPGSEQ). Residues N101, N303, and N371 are each glycosylated (N-linked (GlcNAc...) asparagine).

It belongs to the acid ceramidase family.

It catalyses the reaction an N-acyl-sphingoid base + H2O = a sphingoid base + a fatty acid. The enzyme catalyses an N-acylsphing-4-enine + H2O = sphing-4-enine + a fatty acid. It carries out the reaction an N-acyl-15-methylhexadecasphing-4-enine + H2O = 15-methylhexadecasphing-4-enine + a fatty acid. Its function is as follows. Catalyzes the hydrolysis of ceramides into sphingoid base and free fatty acid. C.elegans contain specific sphingoid bases, which are unique or different in structure compared to the sphingoid bases found in other animals. Two examples of these distinctive compounds are: 15-methylhexadecasphinganine and 15-methylhexadecasphing-4-enine. This chain is Probable acid ceramidase, found in Caenorhabditis elegans.